A 302-amino-acid polypeptide reads, in one-letter code: Protein TILLER ANGLE CONTROL 1 (302 aa).

Residues 57–63 (GILTIGT) carry the IGT motif motif. 2 disordered regions span residues 82–115 (ESEE…VEDE) and 159–180 (EGSS…KNKK). Residues 99–115 (DDDDDDDEHYDHSVEDE) show a composition bias toward acidic residues. Residues 162–175 (SEISTKPDQSANDQ) show a composition bias toward polar residues.

The protein belongs to the TAC family. Highly expressed in flower buds. Expressed in branch attachment sites, vegetative buds and young fruits.

Its function is as follows. Involved in the regulation of axillary shoot growth angle. Promotes horizontal shoot growth. The polypeptide is Protein TILLER ANGLE CONTROL 1 (Prunus persica (Peach)).